The primary structure comprises 366 residues: Protein BIG GRAIN 1-like B (366 aa).

Disordered stretches follow at residues 42–73 and 129–148; these read DSST…DFNR and FERS…EHGS. The segment covering 56–73 has biased composition (basic and acidic residues); that stretch reads QNREDTRVSANRRDDFNR.

The protein belongs to the BIG GRAIN 1 (BG1) plant protein family.

It localises to the cell membrane. Involved in auxin transport. Regulator of the auxin signaling pathway. The protein is Protein BIG GRAIN 1-like B of Arabidopsis thaliana (Mouse-ear cress).